The primary structure comprises 707 residues: MDFYREEDYGLYALTILAQYHNIAVNPEELKHKFDLEGKGLDLTAWLLAAKSLELKAKQVKKAIDRLAFIALPALVWREDGKHFILTKIDNEAKKYLIFDLETHNPRILEQAEFESLYQGKLILVASRASIVGKLAKFDFTWFIPAVIKYRKIFIETLIVSIFLQIFALITPLFFQVVMDKVLVHRGFSTLNVITVALAIVVLFEIVLNGLRTYIFAHSTSRIDVELGARLFRHLLALPISYFENRRVGDTVARVRELDQIRNFLTGQALTSVLDLMFSFIFFAVMWYYSPKLTLVILGSLPFYMGWSIFISPILRRRLDEKFARGADNQSFLVESVTAINTIKALAVTPQMTNTWDKQLASYVSAGFRVTTLATIGQQGVQFIQKVVMVITLWLGAHLVISGDLSIGQLIAFNMLSGQVIAPVIRLAQLWQDFQQVGISVTRLGDVLNSPTESYQGKLALPEIKGDITFRNIRFRYKPDAPVILNDVNLSIQQGEVIGIVGRSGSGKSTLTKLIQRFYIPENGQVLIDGHDLALADPNWLRRQVGVVLQDNVLLNRSIRDNIALADPGMPMEKIVHAAKLAGAHEFISELREGYNTIVGEQGAGLSGGQRQRIAIARALVNNPKILIFDEATSALDYESEHIIMRNMHQICKGRTVIIIAHRLSTVKNADRIIVMEKGQIVEQGKHKELLADPNGLYHYLHQLQSE.

Residues 1–125 form the Peptidase C39 domain; sequence MDFYREEDYG…SLYQGKLILV (125 aa). The active site involves His83. Residues 154 to 436 form the ABC transmembrane type-1 domain; that stretch reads FIETLIVSIF…LAQLWQDFQQ (283 aa). 5 helical membrane-spanning segments follow: residues 158–178, 188–208, 295–315, 387–407, and 410–430; these read LIVS…FQVV, FSTL…EIVL, LVIL…SPIL, VVMV…DLSI, and LIAF…LAQL. The ABC transporter domain maps to 468-703; it reads ITFRNIRFRY…PNGLYHYLHQ (236 aa). 502-509 is a binding site for ATP; it reads GRSGSGKS.

Belongs to the ABC transporter superfamily. Protein-1 exporter (TC 3.A.1.109) family. In terms of assembly, homodimer.

Its subcellular location is the cell membrane. In terms of biological role, involved in the transport of the toxin RTX-I as well as that of RTX-II. The chain is Toxin RTX-I translocation ATP-binding protein (apxIB) from Actinobacillus pleuropneumoniae (Haemophilus pleuropneumoniae).